Consider the following 368-residue polypeptide: tRNA 2-selenouridine synthase (368 aa).

The 125-residue stretch at 12–136 (FLGDAPLLDT…MRGFLLETIE (125 aa)) folds into the Rhodanese domain. Cysteine 95 (S-selanylcysteine intermediate) is an active-site residue.

It belongs to the SelU family. In terms of assembly, monomer.

The enzyme catalyses 5-methylaminomethyl-2-thiouridine(34) in tRNA + selenophosphate + (2E)-geranyl diphosphate + H2O + H(+) = 5-methylaminomethyl-2-selenouridine(34) in tRNA + (2E)-thiogeraniol + phosphate + diphosphate. It carries out the reaction 5-methylaminomethyl-2-thiouridine(34) in tRNA + (2E)-geranyl diphosphate = 5-methylaminomethyl-S-(2E)-geranyl-thiouridine(34) in tRNA + diphosphate. It catalyses the reaction 5-methylaminomethyl-S-(2E)-geranyl-thiouridine(34) in tRNA + selenophosphate + H(+) = 5-methylaminomethyl-2-(Se-phospho)selenouridine(34) in tRNA + (2E)-thiogeraniol. The catalysed reaction is 5-methylaminomethyl-2-(Se-phospho)selenouridine(34) in tRNA + H2O = 5-methylaminomethyl-2-selenouridine(34) in tRNA + phosphate. Its function is as follows. Involved in the post-transcriptional modification of the uridine at the wobble position (U34) of tRNA(Lys), tRNA(Glu) and tRNA(Gln). Catalyzes the conversion of 2-thiouridine (S2U-RNA) to 2-selenouridine (Se2U-RNA). Acts in a two-step process involving geranylation of 2-thiouridine (S2U) to S-geranyl-2-thiouridine (geS2U) and subsequent selenation of the latter derivative to 2-selenouridine (Se2U) in the tRNA chain. This Bordetella bronchiseptica (strain ATCC BAA-588 / NCTC 13252 / RB50) (Alcaligenes bronchisepticus) protein is tRNA 2-selenouridine synthase.